Here is a 647-residue protein sequence, read N- to C-terminus: 1-deoxy-D-xylulose-5-phosphate synthase (647 aa).

Residues H74 and 115–117 contribute to the thiamine diphosphate site; that span reads GHS. D146 lines the Mg(2+) pocket. Thiamine diphosphate contacts are provided by residues 147-148, N175, Y286, and E367; that span reads GA. N175 is a Mg(2+) binding site.

Belongs to the transketolase family. DXPS subfamily. Homodimer. Requires Mg(2+) as cofactor. It depends on thiamine diphosphate as a cofactor.

The enzyme catalyses D-glyceraldehyde 3-phosphate + pyruvate + H(+) = 1-deoxy-D-xylulose 5-phosphate + CO2. It participates in metabolic intermediate biosynthesis; 1-deoxy-D-xylulose 5-phosphate biosynthesis; 1-deoxy-D-xylulose 5-phosphate from D-glyceraldehyde 3-phosphate and pyruvate: step 1/1. In terms of biological role, catalyzes the acyloin condensation reaction between C atoms 2 and 3 of pyruvate and glyceraldehyde 3-phosphate to yield 1-deoxy-D-xylulose-5-phosphate (DXP). This chain is 1-deoxy-D-xylulose-5-phosphate synthase, found in Heliobacterium modesticaldum (strain ATCC 51547 / Ice1).